We begin with the raw amino-acid sequence, 367 residues long: Molybdopterin synthase catalytic subunit (367 aa).

Residues 101–102, Lys-117, and 124–126 contribute to the substrate site; these read HR and KKE. The segment at 326-345 is disordered; that stretch reads HFTKREPSSMEAAPPKKIRK.

This sequence belongs to the MoaE family. MOCS2B subfamily. Heterotetramer; composed of 2 small (Mocs2A) and 2 large (Mocs2B) subunits.

The protein localises to the cytoplasm. It catalyses the reaction 2 [molybdopterin-synthase sulfur-carrier protein]-C-terminal-Gly-aminoethanethioate + cyclic pyranopterin phosphate + H2O = molybdopterin + 2 [molybdopterin-synthase sulfur-carrier protein]-C-terminal Gly-Gly + 2 H(+). Its pathway is cofactor biosynthesis; molybdopterin biosynthesis. In terms of biological role, catalytic subunit of the molybdopterin synthase complex, a complex that catalyzes the conversion of precursor Z into molybdopterin. Acts by mediating the incorporation of 2 sulfur atoms from thiocarboxylated Mocs2A into precursor Z to generate a dithiolene group. The chain is Molybdopterin synthase catalytic subunit from Drosophila sechellia (Fruit fly).